The primary structure comprises 167 residues: MNRIALYTGSFDPLTNGHLDVITSAASICDELVVGIGAHPSKAPLFSVDERAALIDRSCRDFLKERSCRLSVQPFFGLAVEAARAAGARILIRGLRNGSDFDYEAQMAGMNAAMAPEIRTVFFVASPGVGHITATLVRQIAAMGGDVSHFVPQPVLRALEAKSKTDG.

Substrate is bound at residue Ser10. ATP contacts are provided by residues 10 to 11 and His18; that span reads SF. Residues Lys42, Ala79, and Arg93 each coordinate substrate. Residues 94 to 96, Glu104, and 129 to 135 contribute to the ATP site; these read GLR and VGHITAT.

This sequence belongs to the bacterial CoaD family. Homohexamer. Mg(2+) is required as a cofactor.

The protein localises to the cytoplasm. It carries out the reaction (R)-4'-phosphopantetheine + ATP + H(+) = 3'-dephospho-CoA + diphosphate. The protein operates within cofactor biosynthesis; coenzyme A biosynthesis; CoA from (R)-pantothenate: step 4/5. Functionally, reversibly transfers an adenylyl group from ATP to 4'-phosphopantetheine, yielding dephospho-CoA (dPCoA) and pyrophosphate. This chain is Phosphopantetheine adenylyltransferase, found in Methylocella silvestris (strain DSM 15510 / CIP 108128 / LMG 27833 / NCIMB 13906 / BL2).